Consider the following 199-residue polypeptide: Urease accessory protein UreG (199 aa).

Gly8–Thr15 contributes to the GTP binding site.

The protein belongs to the SIMIBI class G3E GTPase family. UreG subfamily. Homodimer. UreH, UreF and UreG form a complex that acts as a GTP-hydrolysis-dependent molecular chaperone, activating the urease apoprotein by helping to assemble the nickel containing metallocenter of UreC. The UreE protein probably delivers the nickel.

It is found in the cytoplasm. In terms of biological role, facilitates the functional incorporation of the urease nickel metallocenter. This process requires GTP hydrolysis, probably effectuated by UreG. This chain is Urease accessory protein UreG, found in Helicobacter pylori (strain G27).